Reading from the N-terminus, the 512-residue chain is Glycerol kinase 2 (512 aa).

Thr-18 provides a ligand contact to ADP. ATP contacts are provided by Thr-18, Thr-19, and Ser-20. Thr-18 serves as a coordination point for sn-glycerol 3-phosphate. Arg-22 is a binding site for ADP. Residues Arg-88, Glu-89, Tyr-140, and Asp-255 each coordinate sn-glycerol 3-phosphate. 5 residues coordinate glycerol: Arg-88, Glu-89, Tyr-140, Asp-255, and Gln-256. ADP is bound by residues Thr-277 and Gly-321. Residues Thr-277, Gly-321, Gln-325, and Gly-422 each contribute to the ATP site. ADP-binding residues include Gly-422 and Asn-426.

This sequence belongs to the FGGY kinase family.

The enzyme catalyses glycerol + ATP = sn-glycerol 3-phosphate + ADP + H(+). It functions in the pathway polyol metabolism; glycerol degradation via glycerol kinase pathway; sn-glycerol 3-phosphate from glycerol: step 1/1. Its activity is regulated as follows. Inhibited by fructose 1,6-bisphosphate (FBP). Functionally, key enzyme in the regulation of glycerol uptake and metabolism. Catalyzes the phosphorylation of glycerol to yield sn-glycerol 3-phosphate. The protein is Glycerol kinase 2 of Streptomyces coelicolor (strain ATCC BAA-471 / A3(2) / M145).